The primary structure comprises 422 residues: Isocitrate dehydrogenase [NADP] (422 aa).

Thr94 is an NADP(+) binding site. 5 residues coordinate D-threo-isocitrate: Ser103, Asn105, Arg109, Arg119, and Arg143. Residue Asp310 coordinates Mg(2+). Residues 344 to 350 (HGTAPKY), Asn357, Tyr396, and Arg400 each bind NADP(+).

It belongs to the isocitrate and isopropylmalate dehydrogenases family. As to quaternary structure, homodimer. Requires Mg(2+) as cofactor. Mn(2+) is required as a cofactor.

It carries out the reaction D-threo-isocitrate + NADP(+) = 2-oxoglutarate + CO2 + NADPH. Its function is as follows. Catalyzes the oxidative decarboxylation of isocitrate to 2-oxoglutarate and carbon dioxide with the concomitant reduction of NADP(+). In Staphylococcus aureus (strain MSSA476), this protein is Isocitrate dehydrogenase [NADP] (icd).